The following is a 282-amino-acid chain: uncharacterized protein (282 aa).

The next 6 helical transmembrane spans lie at 18–38 (PIVL…WAGT), 40–60 (LLVV…VTIG), 87–107 (LWIV…TPVV), 119–139 (ALHF…GAMV), 164–184 (IPVD…PMLI), and 260–280 (VTLA…SLIL).

Belongs to the CbiQ family.

The protein localises to the cell membrane. This is an uncharacterized protein from Mycobacterium tuberculosis (strain CDC 1551 / Oshkosh).